The following is a 201-amino-acid chain: UPF0301 protein Avi_1069 (201 aa).

It belongs to the UPF0301 (AlgH) family.

This Allorhizobium ampelinum (strain ATCC BAA-846 / DSM 112012 / S4) (Agrobacterium vitis (strain S4)) protein is UPF0301 protein Avi_1069.